A 188-amino-acid polypeptide reads, in one-letter code: Putative nucleotidase OB0422 (188 aa).

The protein belongs to the 5'(3')-deoxyribonucleotidase family.

The protein is Putative nucleotidase OB0422 of Oceanobacillus iheyensis (strain DSM 14371 / CIP 107618 / JCM 11309 / KCTC 3954 / HTE831).